The following is a 78-amino-acid chain: UPF0349 protein SSP1836 (78 aa).

It belongs to the UPF0349 family.

In Staphylococcus saprophyticus subsp. saprophyticus (strain ATCC 15305 / DSM 20229 / NCIMB 8711 / NCTC 7292 / S-41), this protein is UPF0349 protein SSP1836.